The following is a 204-amino-acid chain: Holliday junction branch migration complex subunit RuvA (204 aa).

The segment at 1–64 is domain I; sequence MIGRLQGILL…EDAHLLFGFA (64 aa). The interval 65-143 is domain II; it reads QKTDRTLFRE…GVKQSDFFVE (79 aa). Residues 144–155 form a flexible linker region; sequence STHIPLSPSIES. The tract at residues 156–204 is domain III; it reads HSESSSDEAISALIALGYKPVEAEKMVKRVAKPELTSEQVIREALKAAL.

The protein belongs to the RuvA family. Homotetramer. Forms an RuvA(8)-RuvB(12)-Holliday junction (HJ) complex. HJ DNA is sandwiched between 2 RuvA tetramers; dsDNA enters through RuvA and exits via RuvB. An RuvB hexamer assembles on each DNA strand where it exits the tetramer. Each RuvB hexamer is contacted by two RuvA subunits (via domain III) on 2 adjacent RuvB subunits; this complex drives branch migration. In the full resolvosome a probable DNA-RuvA(4)-RuvB(12)-RuvC(2) complex forms which resolves the HJ.

It localises to the cytoplasm. Functionally, the RuvA-RuvB-RuvC complex processes Holliday junction (HJ) DNA during genetic recombination and DNA repair, while the RuvA-RuvB complex plays an important role in the rescue of blocked DNA replication forks via replication fork reversal (RFR). RuvA specifically binds to HJ cruciform DNA, conferring on it an open structure. The RuvB hexamer acts as an ATP-dependent pump, pulling dsDNA into and through the RuvAB complex. HJ branch migration allows RuvC to scan DNA until it finds its consensus sequence, where it cleaves and resolves the cruciform DNA. The chain is Holliday junction branch migration complex subunit RuvA from Haemophilus influenzae (strain PittEE).